Reading from the N-terminus, the 369-residue chain is Histidinol-phosphate aminotransferase 2 (369 aa).

Lys231 is subject to N6-(pyridoxal phosphate)lysine.

The protein belongs to the class-II pyridoxal-phosphate-dependent aminotransferase family. Histidinol-phosphate aminotransferase subfamily. As to quaternary structure, homodimer. Requires pyridoxal 5'-phosphate as cofactor.

It carries out the reaction L-histidinol phosphate + 2-oxoglutarate = 3-(imidazol-4-yl)-2-oxopropyl phosphate + L-glutamate. The protein operates within amino-acid biosynthesis; L-histidine biosynthesis; L-histidine from 5-phospho-alpha-D-ribose 1-diphosphate: step 7/9. This is Histidinol-phosphate aminotransferase 2 from Legionella pneumophila (strain Paris).